Reading from the N-terminus, the 995-residue chain is S1 RNA-binding domain-containing protein 1 (995 aa).

Residues 23–78 (SFSELSSASEEDDKEDSAWEPQKKVPRSRKQPPPKESKPKRMPQVKKNAPQISDGS) are disordered. A Glycyl lysine isopeptide (Lys-Gly) (interchain with G-Cter in SUMO2) cross-link involves residue K84. The segment covering 116 to 132 (TKRKCAAQPHAVRRTKK) has biased composition (basic residues). Residues 116 to 164 (TKRKCAAQPHAVRRTKKLKVDEETSKASYLEGESNSSETPSTSTVWGGT) are disordered. K134 is covalently cross-linked (Glycyl lysine isopeptide (Lys-Gly) (interchain with G-Cter in SUMO2)). Low complexity predominate over residues 146–159 (EGESNSSETPSTST). Glycyl lysine isopeptide (Lys-Gly) (interchain with G-Cter in SUMO2) cross-links involve residues K166, K167, and K183. K185 participates in a covalent cross-link: Glycyl lysine isopeptide (Lys-Gly) (interchain with G-Cter in SUMO1); alternate. Residue K185 forms a Glycyl lysine isopeptide (Lys-Gly) (interchain with G-Cter in SUMO2); alternate linkage. The stretch at 258-288 (ADSLREVQQTLEELRAVAKKVHSTIQKIKKE) forms a coiled coil. A Phosphoserine modification is found at S861. One can recognise an S1 motif domain in the interval 919–992 (GTVLTGKVEN…PRSRITLDLI (74 aa)). K955 participates in a covalent cross-link: Glycyl lysine isopeptide (Lys-Gly) (interchain with G-Cter in SUMO2). At S964 the chain carries Phosphoserine.

This is S1 RNA-binding domain-containing protein 1 (SRBD1) from Pongo abelii (Sumatran orangutan).